The chain runs to 214 residues: dITP/XTP pyrophosphatase (214 aa).

13-18 is a binding site for substrate; it reads SHNKGK. Mg(2+)-binding residues include Glu-45 and Asp-74. Asp-74 (proton acceptor) is an active-site residue. Residues Ser-75, 163-166, Lys-186, and 199-200 contribute to the substrate site; these read FGYD and HR.

The protein belongs to the HAM1 NTPase family. Homodimer. Requires Mg(2+) as cofactor.

The enzyme catalyses XTP + H2O = XMP + diphosphate + H(+). It carries out the reaction dITP + H2O = dIMP + diphosphate + H(+). The catalysed reaction is ITP + H2O = IMP + diphosphate + H(+). Functionally, pyrophosphatase that catalyzes the hydrolysis of nucleoside triphosphates to their monophosphate derivatives, with a high preference for the non-canonical purine nucleotides XTP (xanthosine triphosphate), dITP (deoxyinosine triphosphate) and ITP. Seems to function as a house-cleaning enzyme that removes non-canonical purine nucleotides from the nucleotide pool, thus preventing their incorporation into DNA/RNA and avoiding chromosomal lesions. This chain is dITP/XTP pyrophosphatase, found in Agrobacterium fabrum (strain C58 / ATCC 33970) (Agrobacterium tumefaciens (strain C58)).